Reading from the N-terminus, the 297-residue chain is Phosphatidylserine decarboxylase proenzyme (297 aa).

Active-site charge relay system; for autoendoproteolytic cleavage activity residues include D100, H157, and S263. S263 (schiff-base intermediate with substrate; via pyruvic acid; for decarboxylase activity) is an active-site residue. S263 is subject to Pyruvic acid (Ser); by autocatalysis.

Belongs to the phosphatidylserine decarboxylase family. PSD-B subfamily. Prokaryotic type I sub-subfamily. Heterodimer of a large membrane-associated beta subunit and a small pyruvoyl-containing alpha subunit. Pyruvate serves as cofactor. Post-translationally, is synthesized initially as an inactive proenzyme. Formation of the active enzyme involves a self-maturation process in which the active site pyruvoyl group is generated from an internal serine residue via an autocatalytic post-translational modification. Two non-identical subunits are generated from the proenzyme in this reaction, and the pyruvate is formed at the N-terminus of the alpha chain, which is derived from the carboxyl end of the proenzyme. The autoendoproteolytic cleavage occurs by a canonical serine protease mechanism, in which the side chain hydroxyl group of the serine supplies its oxygen atom to form the C-terminus of the beta chain, while the remainder of the serine residue undergoes an oxidative deamination to produce ammonia and the pyruvoyl prosthetic group on the alpha chain. During this reaction, the Ser that is part of the protease active site of the proenzyme becomes the pyruvoyl prosthetic group, which constitutes an essential element of the active site of the mature decarboxylase.

The protein localises to the cell membrane. The catalysed reaction is a 1,2-diacyl-sn-glycero-3-phospho-L-serine + H(+) = a 1,2-diacyl-sn-glycero-3-phosphoethanolamine + CO2. Its pathway is phospholipid metabolism; phosphatidylethanolamine biosynthesis; phosphatidylethanolamine from CDP-diacylglycerol: step 2/2. In terms of biological role, catalyzes the formation of phosphatidylethanolamine (PtdEtn) from phosphatidylserine (PtdSer). This is Phosphatidylserine decarboxylase proenzyme from Actinobacillus pleuropneumoniae serotype 5b (strain L20).